Here is a 301-residue protein sequence, read N- to C-terminus: ATP synthase gamma chain (301 aa).

Belongs to the ATPase gamma chain family. As to quaternary structure, F-type ATPases have 2 components, CF(1) - the catalytic core - and CF(0) - the membrane proton channel. CF(1) has five subunits: alpha(3), beta(3), gamma(1), delta(1), epsilon(1). CF(0) has three main subunits: a, b and c.

The protein resides in the cell inner membrane. Functionally, produces ATP from ADP in the presence of a proton gradient across the membrane. The gamma chain is believed to be important in regulating ATPase activity and the flow of protons through the CF(0) complex. In Bordetella avium (strain 197N), this protein is ATP synthase gamma chain.